We begin with the raw amino-acid sequence, 246 residues long: Cell division protein ZapD (246 aa).

Belongs to the ZapD family. As to quaternary structure, interacts with FtsZ.

Its subcellular location is the cytoplasm. Functionally, cell division factor that enhances FtsZ-ring assembly. Directly interacts with FtsZ and promotes bundling of FtsZ protofilaments, with a reduction in FtsZ GTPase activity. The polypeptide is Cell division protein ZapD (Vibrio atlanticus (strain LGP32) (Vibrio splendidus (strain Mel32))).